An 835-amino-acid polypeptide reads, in one-letter code: Pre-mRNA-processing protein 40C (835 aa).

The span at Met1–Ser20 shows a compositional bias: polar residues. The segment at Met1–Phe22 is disordered. WW domains follow at residues Gly243–Gly276 and Ser295–Glu328. The disordered stretch occupies residues Ser397–Ser459. Over residues Pro400–Gly428 the composition is skewed to polar residues. FF domains follow at residues Lys455–Thr509, Arg519–Ser577, and Arg590–Glu643. Disordered stretches follow at residues Arg649–Arg677 and Thr714–Lys738. FF domains are found at residues Arg691–Ser748 and Tyr750–Asp815.

The protein belongs to the PRPF40 family. Interacts (via the WW domains) with the phosphorylated C-terminal domain of NRPB1 (via CTD domain). As to expression, expressed in roots, shoots, rosette leaves, cauline leaves, stems and flowers.

It localises to the nucleus. Functionally, binds the phosphorylated C-terminal domain (CTD) of the largest subunit of RNA polymerase II and functions as a scaffold for RNA processing machineries. May be involved in pre-mRNA splicing. The chain is Pre-mRNA-processing protein 40C from Arabidopsis thaliana (Mouse-ear cress).